A 1159-amino-acid polypeptide reads, in one-letter code: Calcium-activated potassium channel subunit alpha-1 (1159 aa).

Over 1 to 24 the chain is Extracellular; it reads EPNMDALIIPVTMEVPCDSRGQRM. A helical transmembrane segment spans residues 25 to 45; sequence WWAFLASSMVTFFGGLFIILL. Topologically, residues 46–116 are cytoplasmic; sequence WRTLKYLWTV…MISAQTLTGR (71 aa). 3 S-palmitoyl cysteine lipidation sites follow: C56, C57, and C59. A helical transmembrane segment spans residues 117–137; the sequence is VLVVLVFALSIGALVIYFIDS. At 138 to 152 the chain is on the extracellular side; sequence SNPIESCQNFYKDFT. Residues 153–173 form a helical membrane-spanning segment; it reads LQIDMAFNVFFLLYFGLRFIA. The Cytoplasmic segment spans residues 174–177; the sequence is ANDN. A helical transmembrane segment spans residues 178–198; that stretch reads LWFWLEVNSVVDFFTVPPVFV. Residues 199–202 are Extracellular-facing; that stretch reads SVYL. A helical; Voltage-sensor membrane pass occupies residues 203 to 223; the sequence is NRSWLGLRFLRALRLIQFSEI. Over 224 to 238 the chain is Cytoplasmic; sequence LQFLNILKTSNSIKL. Residues 239–259 form a helical membrane-spanning segment; the sequence is VNLLSIFISTWLTAAGFIHLV. The Extracellular segment spans residues 260-273; sequence ENSGDPWENFQNSQ. Residues 274-296 constitute an intramembrane region (pore-forming); it reads ALTYWECVYLLMVTMSTVGYGDV. The Selectivity for potassium signature appears at 290 to 293; sequence TVGY. Residues 297–305 are Extracellular-facing; that stretch reads YAKTTPGGL. A helical transmembrane segment spans residues 306–326; that stretch reads FIVFFILGGLAMFASYVPEII. Over 327–1159 the chain is Cytoplasmic; the sequence is EIIGNRKKYG…PPIREVEDEC (833 aa). The region spanning 345–487 is the RCK N-terminal 1 domain; it reads RKHIVVCGHI…WNWKEGDDAI (143 aa). Residues E377, Q400, and E402 each coordinate Mg(2+). Positions 494-514 are segment S7; it reads LGFIAQSCLAQGLSTMLANLF. The interval 551–571 is segment S8; the sequence is LSFPTVCELCFVKLKLLMIAI. The interval 615-619 is heme-binding motif; it reads CKACH. The tract at residues 639-668 is disordered; that stretch reads EQPSTLSPKKKQRNGGMRNSPSSSPKLMRH. At T643 the chain carries Phosphothreonine. Phosphoserine occurs at positions 645, 658, and 662. The tract at residues 717-737 is segment S9; the sequence is VLSGHVVVCIFGHVSSALIGL. The RCK N-terminal 2 domain occupies 719–863; it reads SGHVVVCIFG…MDKSSPDNSP (145 aa). T850 carries the post-translational modification Phosphothreonine. A phosphoserine mark is found at S858 and S862. The Calcium bowl signature appears at 883–905; it reads TELVNDTNVQFLDQDDDDDPDTE. Ca(2+) is bound by residues Q892, D895, D898, and D900. The tract at residues 912-932 is segment S10; sequence FACGTAFAVSVLDSLMSATYF. The segment covering 1066–1091 has biased composition (low complexity); sequence RASLSHSSHSSQSSSKKSSSVHSIPS. Residues 1066-1124 are disordered; that stretch reads RASLSHSSHSSQSSSKKSSSVHSIPSTANRQNRPKSRESRDKQTEKKWFTDEPDNAYPR. Positions 1100–1115 are enriched in basic and acidic residues; that stretch reads KSRESRDKQTEKKWFT. A phosphoserine mark is found at S1101 and S1104.

This sequence belongs to the potassium channel family. Calcium-activated (TC 1.A.1.3) subfamily. KCa1.1/KCNMA1 sub-subfamily. Homotetramer; which constitutes the calcium-activated potassium channel. Interacts with beta subunits KCNMB1, KCNMB2, KCNMB3 and KCNMB4. Interacts with gamma subunits LRRC26, LRRC38, LRRC52 and LRRC55. Beta and gamma subunits are accessory, and modulate its activity. Interacts with RAB11B. In terms of processing, phosphorylated. Phosphorylation by kinases such as PKA and/or PKG. In smooth muscles, phosphorylation affects its activity. Post-translationally, palmitoylation by ZDHHC22 and ZDHHC23 within the intracellular linker between the S0 and S1 transmembrane domains regulates localization to the plasma membrane. Depalmitoylated by LYPLA1 and LYPLAL1, leading to retard exit from the trans-Golgi network. As to expression, expressed in all vascular and smooth muscles.

The protein resides in the cell membrane. The enzyme catalyses K(+)(in) = K(+)(out). With respect to regulation, ethanol and carbon monoxide-bound heme increase channel activation. Heme inhibits channel activation. In terms of biological role, potassium channel activated by both membrane depolarization or increase in cytosolic Ca(2+) that mediates export of K(+). It is also activated by the concentration of cytosolic Mg(2+). Its activation dampens the excitatory events that elevate the cytosolic Ca(2+) concentration and/or depolarize the cell membrane. It therefore contributes to repolarization of the membrane potential. Plays a key role in controlling excitability in a number of systems, such as regulation of the contraction of smooth muscle, the tuning of hair cells in the cochlea, regulation of transmitter release, and innate immunity. In smooth muscles, its activation by high level of Ca(2+), caused by ryanodine receptors in the sarcoplasmic reticulum, regulates the membrane potential. In cochlea cells, its number and kinetic properties partly determine the characteristic frequency of each hair cell and thereby helps to establish a tonotopic map. Kinetics of KCNMA1 channels are determined by alternative splicing, phosphorylation status and its combination with modulating beta subunits. Highly sensitive to both iberiotoxin (IbTx) and charybdotoxin (CTX). This Canis lupus familiaris (Dog) protein is Calcium-activated potassium channel subunit alpha-1 (KCNMA1).